The following is a 203-amino-acid chain: Small ribosomal subunit protein uS4 (203 aa).

The 62-residue stretch at 93–154 (RRFDNVVYRC…KSRNLDAVAD (62 aa)) folds into the S4 RNA-binding domain.

Belongs to the universal ribosomal protein uS4 family. In terms of assembly, part of the 30S ribosomal subunit. Contacts protein S5. The interaction surface between S4 and S5 is involved in control of translational fidelity.

Functionally, one of the primary rRNA binding proteins, it binds directly to 16S rRNA where it nucleates assembly of the body of the 30S subunit. With S5 and S12 plays an important role in translational accuracy. The polypeptide is Small ribosomal subunit protein uS4 (Chlorobaculum parvum (strain DSM 263 / NCIMB 8327) (Chlorobium vibrioforme subsp. thiosulfatophilum)).